Reading from the N-terminus, the 403-residue chain is MFLGAAMAQVSLCMIVRDEAELLPRCLASVKDQVDELIVLDTGSRDRTPAIATEAGAKLLHTDWADDFSAARNQAIAAATGDWILVLDADEELILEAWTELRSQLDQPEALAFTVLREETQAGQVPYSRLSRLFRNRPDIRFQRPYHELVDDSLLALQQQEPNWRITAWPTPVIRHYGYGRDRLQQRGTAERMRQSLETWLADHPEDAYLCSKLGGLLVQEGDLKAAQRWLKQGLKQGRPEPAVRYELLYHLALLERRQGDLDAAIDRYQAALQEPVDAIHKLGAWVNLSHLYRDRGQLGLAYDAARQAVAAAPQATVALTALGLAARAIGNYPEAIAAYQQALQLDPNDPSLYQNLGAVLFQVGQLEASYAAFRQAIAGYEQQGSPEAQRLELRLQAMGIRL.

TPR repeat units lie at residues 208–243 (AYLCSKLGGLLVQEGDLKAAQRWLKQGLKQGRPEPA), 244–282 (VRYELLYHLALLERRQGDLDAAIDRYQAALQEPVDAIHK), 283–316 (LGAWVNLSHLYRDRGQLGLAYDAARQAVAAAPQA), 317–350 (TVALTALGLAARAIGNYPEAIAAYQQALQLDPND), and 351–387 (PSLYQNLGAVLFQVGQLEASYAAFRQAIAGYEQQGSP).

The protein is TPR repeat-containing protein Synpcc7942_0270 of Synechococcus elongatus (strain ATCC 33912 / PCC 7942 / FACHB-805) (Anacystis nidulans R2).